A 357-amino-acid polypeptide reads, in one-letter code: P2Y purinoceptor 8 (357 aa).

The Extracellular portion of the chain corresponds to Met1–Pro26. The N-linked (GlcNAc...) asparagine glycan is linked to Asn4. A helical transmembrane segment spans residues Val27–Leu47. At Cys48–Pro56 the chain is on the cytoplasmic side. The chain crosses the membrane as a helical span at residues Ser57 to Phe77. Residues Gln78–Leu97 lie on the Extracellular side of the membrane. A disulfide bond links Cys95 and Cys174. Residues Val98 to Ile118 traverse the membrane as a helical segment. Topologically, residues Glu119–Arg137 are cytoplasmic. A helical transmembrane segment spans residues Tyr138–Glu158. Over Ser159–Asn185 the chain is Extracellular. The chain crosses the membrane as a helical span at residues Phe186 to Ile206. The Cytoplasmic portion of the chain corresponds to Val207–Tyr236. Residues Leu237–Leu257 traverse the membrane as a helical segment. Topologically, residues Ala258–Tyr271 are extracellular. A helical transmembrane segment spans residues Pro272 to Phe294. Residues Ala295–Phe357 lie on the Cytoplasmic side of the membrane.

Belongs to the G-protein coupled receptor 1 family.

It localises to the cell membrane. In terms of biological role, probable receptor for purines coupled to G-proteins. The polypeptide is P2Y purinoceptor 8 (P2RY8) (Gallus gallus (Chicken)).